Here is a 512-residue protein sequence, read N- to C-terminus: MRTIEIFDTTLRDGEQSPGVNISTNEKVEIALQLEKLGVNRMEAGFAAASPGDQKSVAEVAKRVKNATVVSLARAVKDDMDKAYEALRNAQNASLHVFLATSPIHRQFKLNMSKEEVLARAVEAVTYAKKYFTEVQFSAEDAARTEIDFLAEVVEAVIKAGATTVNIPDTVGYMTPYQYGNIFRELKKRVPSTDLIRLSCHCHDDLGMAVANSLAAVEGGATQVEGTINGIGERAGNAALEEVALALETRKDYYQATTKLNLKEIARTSQLVSRLTGMIVPGNKAVVGANAFAHESGIHQDGVLKEVTTYEIIRPESVGFKSNKLVLGKHSGRHAFKEKLVDLGYHLEQEEVNAAFAAFKVLCDKKKEITDDDILALVDSKMVRGPEAFQLESVQLAYGNISVPTASVRLVRADGSVCEEAACGNGSVDSIYKAIDRATGEEVSLVDYKILSVTHGQDALGEVFVRLQQDDLIVTGRGVSTDVLEASAIAYVRAVNKIMERRGEPTPVSATI.

The 263-residue stretch at Ile4 to Ala266 folds into the Pyruvate carboxyltransferase domain. Residues Asp13, His201, His203, and Asn237 each contribute to the Mn(2+) site. Residues Gln390–Ile512 are regulatory domain.

It belongs to the alpha-IPM synthase/homocitrate synthase family. LeuA type 1 subfamily. Homodimer. Requires Mn(2+) as cofactor.

Its subcellular location is the cytoplasm. It carries out the reaction 3-methyl-2-oxobutanoate + acetyl-CoA + H2O = (2S)-2-isopropylmalate + CoA + H(+). It functions in the pathway amino-acid biosynthesis; L-leucine biosynthesis; L-leucine from 3-methyl-2-oxobutanoate: step 1/4. In terms of biological role, catalyzes the condensation of the acetyl group of acetyl-CoA with 3-methyl-2-oxobutanoate (2-ketoisovalerate) to form 3-carboxy-3-hydroxy-4-methylpentanoate (2-isopropylmalate). The protein is 2-isopropylmalate synthase of Brevibacillus brevis (strain 47 / JCM 6285 / NBRC 100599).